A 225-amino-acid polypeptide reads, in one-letter code: Glycerol-3-phosphate acyltransferase (225 aa).

A run of 6 helical transmembrane segments spans residues 6–26, 55–75, 95–115, 135–155, 160–180, and 187–207; these read FFFF…LIIG, WGIV…IICL, DIAI…SIFN, PFIG…VGYA, IMAT…PGIT, and ILYF…HSNI.

The protein belongs to the PlsY family. As to quaternary structure, probably interacts with PlsX.

The protein localises to the cell membrane. The enzyme catalyses an acyl phosphate + sn-glycerol 3-phosphate = a 1-acyl-sn-glycero-3-phosphate + phosphate. The protein operates within lipid metabolism; phospholipid metabolism. Catalyzes the transfer of an acyl group from acyl-phosphate (acyl-PO(4)) to glycerol-3-phosphate (G3P) to form lysophosphatidic acid (LPA). This enzyme utilizes acyl-phosphate as fatty acyl donor, but not acyl-CoA or acyl-ACP. The sequence is that of Glycerol-3-phosphate acyltransferase from Phytoplasma australiense.